The sequence spans 988 residues: Voltage-gated delayed rectifier potassium channel KCNH5 (988 aa).

The Cytoplasmic segment spans residues 1 to 217; it reads MPGGKRGLVA…LHYCAFKTTW (217 aa). Residues 14-86 enclose the PAS domain; the sequence is TFLENIVRRS…TIEKVRQTFD (73 aa). Residues 91-143 enclose the PAC domain; that stretch reads NCFEVLLYKKNRTPVWFYMQIAPIRNEHEKVVLFLCTFKDITLFKQPIEDDST. A helical membrane pass occupies residues 218-238; sequence DWVILILTFYTAIMVPYNVSF. Residues 239 to 243 are Extracellular-facing; that stretch reads KTKQN. The chain crosses the membrane as a helical span at residues 244–264; sequence NIAWLVLDSVVDVIFLVDIVL. Residues 265–291 lie on the Cytoplasmic side of the membrane; sequence NFHTTFVGPGGEVISDPKLIRMNYLKT. Residues 292–312 form a helical membrane-spanning segment; it reads WFVIDLLSCLPYDIINAFENV. Residues 313 to 319 lie on the Extracellular side of the membrane; it reads DEGISSL. A helical; Voltage-sensor transmembrane segment spans residues 320-340; that stretch reads FSSLKVVRLLRLGRVARKLDH. At 341 to 346 the chain is on the cytoplasmic side; that stretch reads YLEYGA. The helical transmembrane segment at 347–367 threads the bilayer; that stretch reads AVLVLLVCVFGLVAHWLACIW. Residues 368–419 lie on the Extracellular side of the membrane; sequence YSIGDYEVIDEVTNTIQIDSWLYQLALSIGTPYRYNTSAGIWEGGPSKDSLY. Residue asparagine 403 is glycosylated (N-linked (GlcNAc...) asparagine). The segment at residues 420–440 is an intramembrane region (pore-forming); sequence VSSLYFTMTSLTTIGFGNIAP. The short motif at 432-437 is the Selectivity filter element; sequence TIGFGN. At 441–446 the chain is on the extracellular side; it reads TTDVEK. The helical transmembrane segment at 447–467 threads the bilayer; sequence MFSVAMMMVGSLLYATIFGNV. Residues 468-988 lie on the Cytoplasmic side of the membrane; sequence TTIFQQMYAN…PESDKDEINF (521 aa). 550–667 provides a ligand contact to a nucleoside 3',5'-cyclic phosphate; that stretch reads AFRLASDGCL…NSFSRNLTLT (118 aa). The calmodulin-binding stretch occupies residues 704–715; it reads HPVRKLFQKFKQ. A disordered region spans residues 718–742; sequence ELRNQGSAQSDPERSQLQVESRPLQ. Residues 721–742 are compositionally biased toward polar residues; that stretch reads NQGSAQSDPERSQLQVESRPLQ. Lysine 785 participates in a covalent cross-link: Glycyl lysine isopeptide (Lys-Gly) (interchain with G-Cter in ubiquitin). Disordered regions lie at residues 839–897 and 946–965; these read LLSE…AKHP and SVPQTSSPKPQIPLQVPPQI. Residues 871 to 885 show a composition bias toward basic and acidic residues; that stretch reads SDLRLDKAGEARSPL. Serine 883 bears the Phosphoserine mark. The tract at residues 909–948 is CAD (involved in subunit assembly); sequence TLQEVKHELKEDIQLLSCRMTALEKQVAEILKLLSEKSVP.

The protein belongs to the potassium channel family. H (Eag) (TC 1.A.1.20) subfamily. Kv10.2/KCNH5 sub-subfamily. As to quaternary structure, homotetramer. The potassium channel is probably composed of a homo- or heterotetrameric complex of pore-forming alpha subunits that can associate with modulating beta subunits. Heteromultimer with KCNH1/EAG. As to expression, detected in adult testis and in embryonic and adult brain, but not in other tissues. Highly expressed in specific brain areas, such as neocortex, olfactory bulb, primary olfactory cortex and brain stem. In cortex, expression is concentrated in a narrow band toward the middle lamella (layer IV). Moderately expressed in spinal cord, dorsal thalamic nuclei, medial hypothalamus, colliculus, lateral lemniscus, pontine nuclei and Islands of Calleja.

The protein resides in the membrane. The enzyme catalyses K(+)(in) = K(+)(out). With respect to regulation, inhibited by low nanomolar concentrations of cytosolic calcium. Its function is as follows. Pore-forming (alpha) subunit of a voltage-gated delayed rectifier potassium channel that mediates outward-rectifying potassium currents which, on depolarization, reaches a steady-state level and do not inactivate. The kinetic is characterized by a slow activation time course and a small voltage dependence of the activation time constants, therefore, starts to open at more negative voltages. The activation kinetics depend on the prepulse potential and external divalent cation concentration. The time course of activation is biphasic with a fast and a slowly activating current component. With negative prepulses, the current activation is delayed and slowed down several fold, whereas more positive prepulses speed up activation, therefore the activation rate depends on holding potential. In Rattus norvegicus (Rat), this protein is Voltage-gated delayed rectifier potassium channel KCNH5.